A 568-amino-acid chain; its full sequence is Estrogen receptor beta-1 (568 aa).

The tract at residues 12 to 169 (SEYAEGDSSL…SLRGKADMHY (158 aa)) is modulating. NR C4-type zinc fingers lie at residues 170-190 (CAVC…CEGC) and 206-230 (CPAT…LRKC). Residues 170–235 (CAVCSDYASG…RLRKCYEVGM (66 aa)) constitute a DNA-binding region (nuclear receptor). An NR LBD domain is found at 292–528 (SPEELIARIM…DLLLEMLDAH (237 aa)).

This sequence belongs to the nuclear hormone receptor family. NR3 subfamily. Binds DNA as a homodimer. Can form a heterodimer with ER-alpha.

It localises to the nucleus. Its function is as follows. Binds estrogens with an affinity similar to that of ER-alpha, and activates expression of reporter genes containing estrogen response elements (ERE) in an estrogen-dependent manner. In Carassius auratus (Goldfish), this protein is Estrogen receptor beta-1 (esr2a).